Consider the following 334-residue polypeptide: O-methyltransferase SfmM3 (334 aa).

Residues Asp190 and 216-218 contribute to the S-adenosyl-L-methionine site; that span reads GDF. The Proton acceptor role is filled by His236.

The protein belongs to the class I-like SAM-binding methyltransferase superfamily. Cation-independent O-methyltransferase family. COMT subfamily.

It catalyses the reaction 5-hydroxy-3-methyl-L-tyrosine + S-adenosyl-L-methionine = 5-hydroxy-3-methyl-O-methyl-L-tyrosine + S-adenosyl-L-homocysteine + H(+). Its pathway is antibiotic biosynthesis. Its function is as follows. O-methyltransferase that mediates the methylation of 3-hydroxy-5-methyl-L-tyrosine (3-OH-5-Me-Tyr) into 3-hydroxy-5-methyl-O-methyltyrosine (3-OH-5-Me-OMe-Tyr), a core structure of saframycin A, a potent antitumor antibiotic that belongs to the tetrahydroisoquinoline family. This Streptomyces lavendulae protein is O-methyltransferase SfmM3.